A 224-amino-acid polypeptide reads, in one-letter code: UPF0173 metal-dependent hydrolase TK0141 (224 aa).

The protein belongs to the UPF0173 family.

The polypeptide is UPF0173 metal-dependent hydrolase TK0141 (Thermococcus kodakarensis (strain ATCC BAA-918 / JCM 12380 / KOD1) (Pyrococcus kodakaraensis (strain KOD1))).